The primary structure comprises 537 residues: 4-coumarate--CoA ligase (537 aa).

ATP-binding residues include S189, S190, G191, T192, T193, and K197. (E)-4-coumaroyl-AMP is bound by residues Y239 and S243. K260 serves as a coordination point for CoA. The tract at residues 262–331 (NLTTCLELIQ…ERFPKAIFGQ (70 aa)) is SBD1. Positions 309, 331, 332, 336, and 344 each coordinate (E)-4-coumaroyl-AMP. ATP is bound by residues Q331, G332, and T336. Positions 332–399 (GYGMTEAGPV…IRGPEIMKGY (68 aa)) are SBD2. Residues D420 and R435 each contribute to the ATP site. (E)-4-coumaroyl-AMP-binding residues include K437 and K441. 2 residues coordinate CoA: K443 and G444. K524 contacts ATP.

It belongs to the ATP-dependent AMP-binding enzyme family. Requires Mg(2+) as cofactor.

It carries out the reaction (E)-4-coumarate + ATP + CoA = (E)-4-coumaroyl-CoA + AMP + diphosphate. The catalysed reaction is (E)-4-coumarate + ATP + H(+) = (E)-4-coumaroyl-AMP + diphosphate. The enzyme catalyses (E)-4-coumaroyl-AMP + CoA = (E)-4-coumaroyl-CoA + AMP + H(+). It participates in phytoalexin biosynthesis; 3,4',5-trihydroxystilbene biosynthesis; 3,4',5-trihydroxystilbene from trans-4-coumarate: step 1/2. Carboxylate--CoA ligase that may use 4-coumarate as substrate. Follows a two-step reaction mechanism, wherein the carboxylate substrate first undergoes adenylation by ATP, followed by a thioesterification in the presence of CoA to yield the final CoA thioester. This Pinus taeda (Loblolly pine) protein is 4-coumarate--CoA ligase (4CL).